Consider the following 1123-residue polypeptide: Probable serine/threonine-protein kinase nek3 (1123 aa).

The region spanning 4–264 (YEEIKTIGKG…VNDILELPFI (261 aa)) is the Protein kinase domain. ATP is bound by residues 10–18 (IGKGSFGRA) and Lys33. Asp130 serves as the catalytic Proton acceptor. Low complexity-rich tracts occupy residues 283-307 (NNDS…ISSS) and 327-415 (NNNN…TSLK). Disordered regions lie at residues 283-310 (NNDS…STEV), 325-415 (NINN…TSLK), 440-802 (SKTP…TNSQ), 866-887 (SAST…TNTM), 908-937 (SVKL…SITD), and 990-1020 (SLNN…NQNN). Over residues 440 to 459 (SKTPISGTKNPTTSKITPSI) the composition is skewed to polar residues. 4 stretches are compositionally biased toward low complexity: residues 478–529 (SKPT…SSSV), 557–576 (SNLS…SNSQ), 588–617 (SPTS…SLKS), and 642–653 (NGNSNVNSTVLN). Positions 654-665 (RSVSSLSIQHKP) are enriched in polar residues. Composition is skewed to low complexity over residues 666–696 (TNSG…TSTT), 712–738 (STPT…TPST), and 752–802 (SSNG…TNSQ). Positions 908–935 (SVKLSSKSSSPIKTSSSSSSSSSSSSSI) are enriched in low complexity.

Belongs to the protein kinase superfamily. NEK Ser/Thr protein kinase family. NIMA subfamily.

It carries out the reaction L-seryl-[protein] + ATP = O-phospho-L-seryl-[protein] + ADP + H(+). It catalyses the reaction L-threonyl-[protein] + ATP = O-phospho-L-threonyl-[protein] + ADP + H(+). The sequence is that of Probable serine/threonine-protein kinase nek3 (nek3) from Dictyostelium discoideum (Social amoeba).